A 715-amino-acid polypeptide reads, in one-letter code: Formate dehydrogenase H (715 aa).

The 4Fe-4S Mo/W bis-MGD-type domain maps to 1–56 (MKKVVTVCPYCASGCKINLVVDNGKIVRAEAAQGKTNQGTLCLKGYYGWDFINDTQ). Positions 8, 11, 15, and 42 each coordinate [4Fe-4S] cluster. Lys-44 acts as the Electron donor/acceptor in catalysis. Mo-bis(molybdopterin guanine dinucleotide) contacts are provided by Arg-110, Sec-140, Asn-176, Asp-179, Ser-180, Cys-201, Asp-202, Arg-204, Gly-221, Asn-223, Met-297, Gln-335, Asp-404, Thr-408, Gln-428, Asp-429, Ser-445, Asp-478, Arg-581, Glu-582, His-585, Ser-587, Tyr-678, and Lys-679. Sec-140 (proton donor/acceptor) is an active-site residue. Position 140 (Sec-140) is a non-standard amino acid, selenocysteine.

It belongs to the prokaryotic molybdopterin-containing oxidoreductase family. Consists of two separable enzymatic activities: a formate dehydrogenase component (FDH-H) and hydrogenase-3. [4Fe-4S] cluster is required as a cofactor. The cofactor is Mo-bis(molybdopterin guanine dinucleotide).

The catalysed reaction is formate + A + H(+) = AH2 + CO2. Inhibited by aerobic conditions. Its function is as follows. Decomposes formic acid to hydrogen and carbon dioxide under anaerobic conditions in the absence of exogenous electron acceptors. In Escherichia coli (strain K12), this protein is Formate dehydrogenase H (fdhF).